The following is a 229-amino-acid chain: UPF0758 protein Mbar_A2303 (229 aa).

The region spanning 106–228 is the MPN domain; sequence KVCSPKDVYT…YVSLKDEGFV (123 aa). Zn(2+)-binding residues include His-177, His-179, and Asp-190. The JAMM motif motif lies at 177 to 190; that stretch reads HNHPSGDPSPSRED.

This sequence belongs to the UPF0758 family.

This chain is UPF0758 protein Mbar_A2303, found in Methanosarcina barkeri (strain Fusaro / DSM 804).